The sequence spans 92 residues: UPF0250 protein XCC3453 (92 aa).

The protein belongs to the UPF0250 family.

This chain is UPF0250 protein XCC3453, found in Xanthomonas campestris pv. campestris (strain ATCC 33913 / DSM 3586 / NCPPB 528 / LMG 568 / P 25).